Consider the following 116-residue polypeptide: Large ribosomal subunit protein uL18 (116 aa).

Belongs to the universal ribosomal protein uL18 family. In terms of assembly, part of the 50S ribosomal subunit; part of the 5S rRNA/L5/L18/L25 subcomplex. Contacts the 5S and 23S rRNAs.

Its function is as follows. This is one of the proteins that bind and probably mediate the attachment of the 5S RNA into the large ribosomal subunit, where it forms part of the central protuberance. The sequence is that of Large ribosomal subunit protein uL18 from Pseudomonas fluorescens (strain ATCC BAA-477 / NRRL B-23932 / Pf-5).